A 141-amino-acid chain; its full sequence is Hemoglobin subunit zeta (141 aa).

Residue serine 1 is modified to N-acetylserine. Residues 1 to 141 enclose the Globin domain; sequence SLTKAERTII…VSGVLTEKYR (141 aa). The residue at position 28 (threonine 28) is a Phosphothreonine. Position 52 is a phosphoserine (serine 52). Histidine 58 is a binding site for heme b. A Phosphoserine modification is found at serine 72. Histidine 87 contacts heme b.

Belongs to the globin family. In terms of assembly, heterotetramer of two zeta chains and two epsilon chains.

Its function is as follows. The zeta chain is an alpha-type chain of mammalian embryonic hemoglobin. This chain is Hemoglobin subunit zeta, found in Sus scrofa (Pig).